Reading from the N-terminus, the 22-residue chain is Zinc metalloproteinase oxiagin (22 aa).

One can recognise a Peptidase M12B domain in the interval 14 to 22; it reads CYIEFYVVV.

It belongs to the venom metalloproteinase (M12B) family. P-III subfamily. P-IIId sub-subfamily. In terms of assembly, heterotrimer; disulfide-linked. The heterotrimer consists of 1 metalloproteinase chain and 2 lectin chains. The cofactor is Zn(2+). N-glycosylated. As to expression, expressed by the venom gland.

It is found in the secreted. Functionally, snake venom metalloproteinase that inhibits the classical complement pathway dose-dependently. It acts by binding to carbohydrates of IgG within the antibody-sensitized sheep erythrocytes (EA) complex, and thus prevents interaction of component C2 with immobilized C4b. Also induces cation-independent hemagglutination that can be prevented by D-galactose pretreatment. The sequence is that of Zinc metalloproteinase oxiagin from Naja oxiana (Central Asian cobra).